A 338-amino-acid polypeptide reads, in one-letter code: Selenocysteine methyltransferase (338 aa).

Residues 1-327 (MSSPLITDFL…DTIRGIYKIL (327 aa)) form the Hcy-binding domain. Zn(2+) contacts are provided by Cys245, Cys312, and Cys313.

In terms of assembly, monomer. Requires Zn(2+) as cofactor. Present in all tissues tested.

The catalysed reaction is S-methyl-L-methionine + L-selenocysteine = Se-methyl-L-selenocysteine + L-methionine + H(+). In terms of biological role, catalyzes the methylation of selenocysteine with S-methylmethionine as donor. Does not methylate cysteine. The sequence is that of Selenocysteine methyltransferase (SMTA) from Astragalus bisulcatus (Two-grooved milkvetch).